The primary structure comprises 186 residues: ATP synthase subunit delta (186 aa).

It belongs to the ATPase delta chain family. F-type ATPases have 2 components, F(1) - the catalytic core - and F(0) - the membrane proton channel. F(1) has five subunits: alpha(3), beta(3), gamma(1), delta(1), epsilon(1). F(0) has three main subunits: a(1), b(2) and c(10-14). The alpha and beta chains form an alternating ring which encloses part of the gamma chain. F(1) is attached to F(0) by a central stalk formed by the gamma and epsilon chains, while a peripheral stalk is formed by the delta and b chains.

The protein localises to the cell inner membrane. Its function is as follows. F(1)F(0) ATP synthase produces ATP from ADP in the presence of a proton or sodium gradient. F-type ATPases consist of two structural domains, F(1) containing the extramembraneous catalytic core and F(0) containing the membrane proton channel, linked together by a central stalk and a peripheral stalk. During catalysis, ATP synthesis in the catalytic domain of F(1) is coupled via a rotary mechanism of the central stalk subunits to proton translocation. This protein is part of the stalk that links CF(0) to CF(1). It either transmits conformational changes from CF(0) to CF(1) or is implicated in proton conduction. This is ATP synthase subunit delta from Brucella anthropi (strain ATCC 49188 / DSM 6882 / CCUG 24695 / JCM 21032 / LMG 3331 / NBRC 15819 / NCTC 12168 / Alc 37) (Ochrobactrum anthropi).